The chain runs to 423 residues: Histidine--tRNA ligase (423 aa).

It belongs to the class-II aminoacyl-tRNA synthetase family. In terms of assembly, homodimer.

It is found in the cytoplasm. It carries out the reaction tRNA(His) + L-histidine + ATP = L-histidyl-tRNA(His) + AMP + diphosphate + H(+). This is Histidine--tRNA ligase (hisS) from Mycobacterium bovis (strain ATCC BAA-935 / AF2122/97).